The following is an 85-amino-acid chain: Large ribosomal subunit protein bL27 (85 aa).

This sequence belongs to the bacterial ribosomal protein bL27 family.

This chain is Large ribosomal subunit protein bL27, found in Sodalis glossinidius (strain morsitans).